The chain runs to 280 residues: UPF0750 membrane protein YitT (280 aa).

Helical transmembrane passes span 9-29, 54-74, 80-100, and 151-171; these read LLIV…FLIP, FYIS…ILGW, SFTV…GILP, and VGTY…LLQG.

It belongs to the UPF0750 family.

The protein localises to the cell membrane. In Bacillus subtilis (strain 168), this protein is UPF0750 membrane protein YitT (yitT).